Here is a 636-residue protein sequence, read N- to C-terminus: Chaperone protein HtpG (636 aa).

The segment at 1-344 is a; substrate-binding; it reads MTLEADKQTH…SADLSLNVSR (344 aa). A b region spans residues 345 to 561; sequence EILQSGPVVD…EGDLGLQMRQ (217 aa). The tract at residues 562–636 is c; it reads LLEASGQKVP…LNKLLLELSA (75 aa).

It belongs to the heat shock protein 90 family. In terms of assembly, homodimer.

The protein resides in the cytoplasm. Molecular chaperone. Has ATPase activity. The protein is Chaperone protein HtpG of Xylella fastidiosa (strain Temecula1 / ATCC 700964).